A 245-amino-acid chain; its full sequence is Venom nerve growth factor 1 (245 aa).

The N-terminal stretch at 1–18 is a signal peptide; the sequence is MSMLCYTLIIAFLIGIWA. A propeptide spanning residues 19-125 is cleaved from the precursor; it reads APKSEDNVPL…ALNRNIRAKR (107 aa). The segment covering 47-66 has biased composition (basic and acidic residues); the sequence is GLKTSRNTDQRHPAPKKAED. Residues 47-69 are disordered; the sequence is GLKTSRNTDQRHPAPKKAEDQEL. Disulfide bonds link cysteine 139–cysteine 206, cysteine 182–cysteine 234, and cysteine 194–cysteine 236. Asparagine 148 and asparagine 151 each carry an N-linked (GlcNAc...) asparagine glycan.

This sequence belongs to the NGF-beta family. Homodimer; non-covalently linked. As to expression, expressed by the venom gland.

It localises to the secreted. Its function is as follows. Nerve growth factor is important for the development and maintenance of the sympathetic and sensory nervous systems. It stimulates division and differentiation of sympathetic and embryonic sensory neurons as well as basal forebrain cholinergic neurons in the brain. Its relevance in the snake venom is not clear. However, it has been shown to inhibit metalloproteinase-dependent proteolysis of platelet glycoprotein Ib alpha, suggesting a metalloproteinase inhibition to prevent metalloprotease autodigestion and/or protection against prey proteases. Binds a lipid between the two protein chains in the homodimer. The lipid-bound form promotes histamine relase from mouse mast cells, contrary to the lipid-free form. This is Venom nerve growth factor 1 from Tropidechis carinatus (Australian rough-scaled snake).